We begin with the raw amino-acid sequence, 294 residues long: Cytosolic Fe-S cluster assembly factor CFD1 (294 aa).

25–32 is an ATP binding site; it reads GKGGVGKS. Cys-214 and Cys-217 together coordinate [4Fe-4S] cluster.

This sequence belongs to the Mrp/NBP35 ATP-binding proteins family. NUBP2/CFD1 subfamily. In terms of assembly, heterotetramer of 2 NBP35 and 2 CFD1 chains. The cofactor is [4Fe-4S] cluster.

It localises to the cytoplasm. Component of the cytosolic iron-sulfur (Fe/S) protein assembly (CIA) machinery. Required for maturation of extramitochondrial Fe-S proteins. The NBP35-CFD1 heterotetramer forms a Fe-S scaffold complex, mediating the de novo assembly of an Fe-S cluster and its transfer to target apoproteins. Required for biogenesis and export of both ribosomal subunits, which may reflect a role in assembly of the Fe/S clusters in RLI1, a protein which performs rRNA processing and ribosome export. In Candida albicans (strain SC5314 / ATCC MYA-2876) (Yeast), this protein is Cytosolic Fe-S cluster assembly factor CFD1.